The following is a 330-amino-acid chain: MGTFTLHQGQSNLIKSFFRNYYLNAELGLPNDMELREFALQPFGSDTYIRHLSFSSSEELRDYLVNRNLPLHLFYSSARYQLPSARDMEEKAWMGSDLLFDIDADHICKLRSIRFCPVCGNAITSEKCERDNVETLEYVEMTSECIKRGLEEARNLVEILEDDFGLKPKVYFSGNRGFHVQVDCYGDCALLDSDERKEIAEYVMGVGVPSYPGGSESAPGWVGRKNRGINGVTIDGQVTIDVKRLIRIPNSLHGKSGLIVKEVTNLDDFEFNEALSPFTGYTIFLPYISIETEVLSRNIKLNRGVPIKIESSIGIYLHLKNLGEVKAYVR.

Residues D101 and D103 contribute to the active site. Zn(2+) is bound by residues C116, C119, C128, and D131. D235 is a catalytic residue.

It belongs to the eukaryotic-type primase small subunit family. Heterodimer of a small subunit (PriS) and a large subunit (PriL). It depends on Mg(2+) as a cofactor. Requires Mn(2+) as cofactor.

Its function is as follows. Catalytic subunit of DNA primase, an RNA polymerase that catalyzes the synthesis of short RNA molecules used as primers for DNA polymerase during DNA replication. The small subunit contains the primase catalytic core and has DNA synthesis activity on its own. Binding to the large subunit stabilizes and modulates the activity, increasing the rate of DNA synthesis while decreasing the length of the DNA fragments, and conferring RNA synthesis capability. The DNA polymerase activity may enable DNA primase to also catalyze primer extension after primer synthesis. May also play a role in DNA repair. The protein is DNA primase small subunit PriS of Saccharolobus islandicus (strain Y.N.15.51 / Yellowstone #2) (Sulfolobus islandicus).